The chain runs to 86 residues: MGYYKKYKEEYYTWKKTYYKKYYDNDKKHYDCDKYYDHDKKHYDYDKKYDDHDKKYYDDHDYHYEKKYYDDDDHYYDFVESYKKHH.

The protein to B.subtilis spore coat protein C.

This is an uncharacterized protein from Bacillus subtilis (strain 168).